A 281-amino-acid chain; its full sequence is NADPH-dependent 7-cyano-7-deazaguanine reductase (281 aa).

89-91 (VES) is a binding site for substrate. 91 to 92 (SK) provides a ligand contact to NADPH. The active-site Thioimide intermediate is the Cys188. Residue Asp195 is the Proton donor of the active site. 227 to 228 (HE) contacts substrate. 256-257 (RG) is an NADPH binding site.

This sequence belongs to the GTP cyclohydrolase I family. QueF type 2 subfamily. In terms of assembly, homodimer.

The protein localises to the cytoplasm. It carries out the reaction 7-aminomethyl-7-carbaguanine + 2 NADP(+) = 7-cyano-7-deazaguanine + 2 NADPH + 3 H(+). The protein operates within tRNA modification; tRNA-queuosine biosynthesis. Its function is as follows. Catalyzes the NADPH-dependent reduction of 7-cyano-7-deazaguanine (preQ0) to 7-aminomethyl-7-deazaguanine (preQ1). In Azoarcus sp. (strain BH72), this protein is NADPH-dependent 7-cyano-7-deazaguanine reductase.